Reading from the N-terminus, the 164-residue chain is Endoribonuclease YbeY (164 aa).

Histidine 120, histidine 124, and histidine 130 together coordinate Zn(2+).

This sequence belongs to the endoribonuclease YbeY family. The cofactor is Zn(2+).

The protein resides in the cytoplasm. In terms of biological role, single strand-specific metallo-endoribonuclease involved in late-stage 70S ribosome quality control and in maturation of the 3' terminus of the 16S rRNA. The polypeptide is Endoribonuclease YbeY (Acidothermus cellulolyticus (strain ATCC 43068 / DSM 8971 / 11B)).